The primary structure comprises 339 residues: Transcription factor IIIA (339 aa).

9 C2H2-type zinc fingers span residues 12-36, 42-66, 72-97, 104-128, 134-158, 161-187, 190-212, 219-244, and 250-274; these read FICS…LCKH, FPCT…VLSH, CKCE…KRAH, YVCY…QYIH, FKCS…EKTH, YPCR…AELH, VTCS…KKIH, YRCP…LTFH, and FVCE…FNTH. The segment at 271–339 is disordered; sequence FNTHDPEKKK…LPVLENLTLK (69 aa). Residues 299–309 show a composition bias toward basic residues; it reads KPKKSKKKKKP. Positions 311 to 323 are enriched in polar residues; sequence QTPAMESQEQQPD.

It is found in the nucleus. Its function is as follows. Involved in ribosomal large subunit biogenesis. Interacts with the internal control region (ICR) of approximately 50 bases within the 5S RNA genes, is required for correct transcription of these genes by RNA polymerase III. Also binds the transcribed 5S RNA's. This chain is Transcription factor IIIA (gtf3a), found in Anaxyrus americanus (American toad).